We begin with the raw amino-acid sequence, 366 residues long: tRNA/tmRNA (uracil-C(5))-methyltransferase (366 aa).

S-adenosyl-L-methionine is bound by residues Gln190, Tyr218, Asn223, Glu239, and Asp299. Cys324 functions as the Nucleophile in the catalytic mechanism. The active-site Proton acceptor is Glu358.

It belongs to the class I-like SAM-binding methyltransferase superfamily. RNA M5U methyltransferase family. TrmA subfamily.

It catalyses the reaction uridine(54) in tRNA + S-adenosyl-L-methionine = 5-methyluridine(54) in tRNA + S-adenosyl-L-homocysteine + H(+). The catalysed reaction is uridine(341) in tmRNA + S-adenosyl-L-methionine = 5-methyluridine(341) in tmRNA + S-adenosyl-L-homocysteine + H(+). Functionally, dual-specificity methyltransferase that catalyzes the formation of 5-methyluridine at position 54 (m5U54) in all tRNAs, and that of position 341 (m5U341) in tmRNA (transfer-mRNA). In Salmonella paratyphi B (strain ATCC BAA-1250 / SPB7), this protein is tRNA/tmRNA (uracil-C(5))-methyltransferase.